A 111-amino-acid polypeptide reads, in one-letter code: Latartoxin-2b (111 aa).

An N-terminal signal peptide occupies residues 1–19 (MKVLVIIALCFFILQTALS). A propeptide spans 20–43 (EDKYESFESYVEDLKSGNMKGEAR) (removed in mature form). Positions 40-43 (GEAR) match the Processing quadruplet motif motif. 5 disulfides stabilise this stretch: Cys45-Cys62, Cys52-Cys73, Cys61-Cys87, Cys75-Cys85, and Cys78-Cys99. Val110 is modified (valine amide).

This sequence belongs to the neurotoxin 19 (CSTX) family. 11 (latartoxin) subfamily. Post-translationally, contains 5 disulfide bonds. In terms of processing, cleavage of the propeptide depends on the processing quadruplet motif (XXXR, with at least one of X being E). Expressed by the venom gland.

It is found in the secreted. Functionally, insect toxin. The polypeptide is Latartoxin-2b (Lachesana tarabaevi (Spider)).